The chain runs to 335 residues: Nucleoid-associated protein Ent638_2782 (335 aa).

This sequence belongs to the YejK family.

Its subcellular location is the cytoplasm. The protein localises to the nucleoid. This is Nucleoid-associated protein Ent638_2782 from Enterobacter sp. (strain 638).